A 278-amino-acid polypeptide reads, in one-letter code: MALKNYKPVTPGQRQLVIVDRSGLHKGKPVKGLTVGLTSKGGRNNYGRITARFQGGGHKRTYRLIDFKRRKFDVSGVIERLEYDPNRTGFIALVRYDDGELSYILAPQRLAAGDRVISSAQSVDVKPGNAMPLAAMPVGTIVHNVELKPGKGGQIARSAGSYAQLVGRDQGMAILRLNSGEQRLVSGTCMATVGAVSNPDHANVSLGKAGRKRWLGKRPHNRGVTMNPVDHPHGGGEGRTSGGRHPVSPWGKPTKGRKTRSNKATDKFIMRSRHQRKS.

The disordered stretch occupies residues 214-278 (WLGKRPHNRG…IMRSRHQRKS (65 aa)).

Belongs to the universal ribosomal protein uL2 family. Part of the 50S ribosomal subunit. Forms a bridge to the 30S subunit in the 70S ribosome.

In terms of biological role, one of the primary rRNA binding proteins. Required for association of the 30S and 50S subunits to form the 70S ribosome, for tRNA binding and peptide bond formation. It has been suggested to have peptidyltransferase activity; this is somewhat controversial. Makes several contacts with the 16S rRNA in the 70S ribosome. This chain is Large ribosomal subunit protein uL2, found in Chelativorans sp. (strain BNC1).